Here is a 1323-residue protein sequence, read N- to C-terminus: PH domain leucine-rich repeat-containing protein phosphatase 2 (1323 aa).

The PH domain occupies 150–248 (RILLSGIYNV…WQRQASKVVS (99 aa)). 22 LRR repeats span residues 250–271 (RISTVDLSCYSLEEVPEHLFYS), 273–296 (DITYLNLRHNFMQLERPGGLDTLY), 300–321 (QLKGLNLSHNKLGLFPILLCEI), 323–344 (TLTELNLSCNGFHDLPSQIGNL), 346–368 (NLQTLCLDGNFLTTLPEELGNLQ), 369–390 (QLSSLGISFNNFSQIPEVYEKL), 392–412 (MLDRVVMAGNCLEVLNLGVLN), 416–439 (HIKHVDLRMNHLKTMVIENLEGNK), 440–460 (HITHVDLRDNRLTDLDLSSLC), 461–480 (SLEQLHCGRNQLRELTLSGF), 481–502 (SLRTLYASSNRLTAVNVYPVPS), 503–524 (LLTFLDLSRNLLECVPDWACEA), 526–547 (KIEVLDVSYNLLTEVPVRILSS), 549–570 (SLRKLMLGHNHVQNLPTLVEHI), 571–592 (PLEVLDLQHNALTRLPDTLFSK), 595–616 (NLRYLNASANSLESLPSACTGE), 621–644 (MLQLLYLTNNLLTDQCIPVLVGHL), 645–666 (HLRILHLANNQLQTFPASKLNK), 669–690 (QLEELNLSGNKLKTIPTTIANC), 692–713 (RLHTLVAHSNNISIFPEILQLP), 714–735 (QIQFVDLSCNDLTEILIPEALP), and 737–758 (TLQDLDLTGNTNLVLEHKTLDI). The PPM-type phosphatase domain maps to 785-1033 (SHGLAEMAGQ…DNVGAMVVYL (249 aa)). The Mn(2+) site is built by aspartate 820, glycine 821, lysine 985, and aspartate 1024. The interval 1060–1157 (TIKDAPKPAT…DSDDDQPVEG (98 aa)) is disordered. The span at 1071-1097 (SSSSGIASEFSSEMSTSEVSSEVGSTA) shows a compositional bias: low complexity. A compositionally biased stretch (polar residues) spans 1122–1146 (PTPTSGLFQRQPSSATFSSNQSDNG). Serine 1210 carries the phosphoserine modification. The interval 1285 to 1323 (HDLEEEVKEQMKQHQDSRLEPEPHEEDRTEPPEEFDTAL) is disordered. Residues 1292-1315 (KEQMKQHQDSRLEPEPHEEDRTEP) show a composition bias toward basic and acidic residues.

Interacts with AKT1, AKT3 and PRKCB isoform beta-II. Interacts with STK4, RPS6KB1, RAF1. Interacts with FKBP5; FKBP5 acts as a scaffold for PHLPP2 and Akt. Interacts with NHERF1; NHERF1 scaffolds a heterotrimeric complex with PTEN. Mn(2+) is required as a cofactor. In terms of tissue distribution, in colorectal cancer tissue, expression is highest in the surface epithelium of normal colonic mucosa adjacent to the cancer tissue but is largely excluded from the crypt bases. Expression is lost or significantly decreased in 80% of tested tumors (at protein level).

The protein resides in the cytoplasm. It is found in the membrane. The protein localises to the nucleus. The enzyme catalyses O-phospho-L-seryl-[protein] + H2O = L-seryl-[protein] + phosphate. The catalysed reaction is O-phospho-L-threonyl-[protein] + H2O = L-threonyl-[protein] + phosphate. Inhibited by AKT1, AKT2 and AKT3. Activated by oleic acid and arachidonic acid. Protein phosphatase involved in regulation of Akt and PKC signaling. Mediates dephosphorylation in the C-terminal domain hydrophobic motif of members of the AGC Ser/Thr protein kinase family; specifically acts on 'Ser-473' of AKT1, 'Ser-660' of PRKCB isoform beta-II and 'Ser-657' of PRKCA. Akt regulates the balance between cell survival and apoptosis through a cascade that primarily alters the function of transcription factors that regulate pro- and antiapoptotic genes. Dephosphorylation of 'Ser-473' of Akt triggers apoptosis and decreases cell proliferation. Also controls the phosphorylation of AKT3. Dephosphorylates STK4 on 'Thr-387' leading to STK4 activation and apoptosis. Dephosphorylates RPS6KB1 and is involved in regulation of cap-dependent translation. Inhibits cancer cell proliferation and may act as a tumor suppressor. Dephosphorylation of PRKCA and PRKCB leads to their destabilization and degradation. Dephosphorylates RAF1 inhibiting its kinase activity. This chain is PH domain leucine-rich repeat-containing protein phosphatase 2 (PHLPP2), found in Homo sapiens (Human).